The following is a 172-amino-acid chain: Large ribosomal subunit protein uL10 (172 aa).

The protein belongs to the universal ribosomal protein uL10 family. Part of the ribosomal stalk of the 50S ribosomal subunit. The N-terminus interacts with L11 and the large rRNA to form the base of the stalk. The C-terminus forms an elongated spine to which L12 dimers bind in a sequential fashion forming a multimeric L10(L12)X complex.

Its function is as follows. Forms part of the ribosomal stalk, playing a central role in the interaction of the ribosome with GTP-bound translation factors. The protein is Large ribosomal subunit protein uL10 of Xanthobacter autotrophicus (strain ATCC BAA-1158 / Py2).